A 406-amino-acid chain; its full sequence is Ascaroside receptor GPR2 (406 aa).

Topologically, residues 1–29 (MTQLPYLLDRRGGALAAPATAWGDMMLNR) are extracellular. The chain crosses the membrane as a helical span at residues 30–50 (ALFSVALLSSVGSAWVVLSYA). Topologically, residues 51 to 61 (CIKELRSYRHQ) are cytoplasmic. Residues 62–82 (LILGLAISDLLMSLNFMFSAG) traverse the membrane as a helical segment. The Extracellular segment spans residues 83-107 (WNVAGGDLALEESRTACSVNGFLTQ). A disulfide bond links cysteine 99 and cysteine 173. The helical transmembrane segment at 108 to 128 (VFVVQTDWWILVIAIATYIIL) threads the bilayer. At 129–143 (GNFKTQSQFIQTHVW) the chain is on the cytoplasmic side. Residues 144–164 (IPWVGPWVLSIIIAAICHGVL) traverse the membrane as a helical segment. Topologically, residues 165–185 (GYGYIGGWCWLTSDLMRLLIN) are extracellular. A helical transmembrane segment spans residues 186-206 (FIPRWLIVIAIALIYIRLYMI). Residues 207 to 326 (VRKARKWDIE…AAQLKRIAKK (120 aa)) are Cytoplasmic-facing. The helical transmembrane segment at 327–347 (MMVYPVAYAIIWACPTAIRIY) threads the bilayer. At 348-356 (QGTTGSRAP) the chain is on the extracellular side. A helical transmembrane segment spans residues 357-377 (LWITIVDKSCIVIQGLVDAVV). The Cytoplasmic portion of the chain corresponds to 378–406 (YGLNERAWQGWRDHIRRIIYKNEGGRIIG).

It belongs to the G-protein coupled receptor 1 family. As to quaternary structure, interacts with ascaroside receptor GPR3; may form a functional heterodimer. Interacts with guanine nucleotide-binding protein alpha GPA2; to activate adenylate cyclase and positively regulate nematode trap formation.

The protein localises to the cell membrane. G protein-coupled receptor that senses nematode ascaroside pheromones and signals via adenylate cyclase to positively regulate trap formation for nematode capture. The chain is Ascaroside receptor GPR2 from Arthrobotrys oligospora (strain ATCC 24927 / CBS 115.81 / DSM 1491) (Nematode-trapping fungus).